The sequence spans 414 residues: Lipoyl synthase, mitochondrial (414 aa).

A mitochondrion-targeting transit peptide spans 1–18; it reads MYRRSVGVLFVGRNTRWI. Residues 51–67 are compositionally biased toward polar residues; sequence GNSTEVENATSQLTGTS. The interval 51–75 is disordered; it reads GNSTEVENATSQLTGTSGKRRKGNR. Residues cysteine 150, cysteine 155, cysteine 161, cysteine 181, cysteine 185, cysteine 188, and serine 396 each contribute to the [4Fe-4S] cluster site. A Radical SAM core domain is found at 164–385; the sequence is GKDKSKATAT…KERALEMGFL (222 aa).

This sequence belongs to the radical SAM superfamily. Lipoyl synthase family. The cofactor is [4Fe-4S] cluster.

The protein resides in the mitochondrion. It carries out the reaction [[Fe-S] cluster scaffold protein carrying a second [4Fe-4S](2+) cluster] + N(6)-octanoyl-L-lysyl-[protein] + 2 oxidized [2Fe-2S]-[ferredoxin] + 2 S-adenosyl-L-methionine + 4 H(+) = [[Fe-S] cluster scaffold protein] + N(6)-[(R)-dihydrolipoyl]-L-lysyl-[protein] + 4 Fe(3+) + 2 hydrogen sulfide + 2 5'-deoxyadenosine + 2 L-methionine + 2 reduced [2Fe-2S]-[ferredoxin]. It functions in the pathway protein modification; protein lipoylation via endogenous pathway; protein N(6)-(lipoyl)lysine from octanoyl-[acyl-carrier-protein]: step 2/2. Functionally, catalyzes the radical-mediated insertion of two sulfur atoms into the C-6 and C-8 positions of the octanoyl moiety bound to the lipoyl domains of lipoate-dependent enzymes, thereby converting the octanoylated domains into lipoylated derivatives. This is Lipoyl synthase, mitochondrial from Saccharomyces cerevisiae (strain RM11-1a) (Baker's yeast).